We begin with the raw amino-acid sequence, 277 residues long: Phosphate import ATP-binding protein PstB 2 (277 aa).

Residues 31 to 272 (IEVPGLNLFY…PAKKQTEDYI (242 aa)) form the ABC transporter domain. 63–70 (GPSGCGKS) provides a ligand contact to ATP.

This sequence belongs to the ABC transporter superfamily. Phosphate importer (TC 3.A.1.7) family. As to quaternary structure, the complex is composed of two ATP-binding proteins (PstB), two transmembrane proteins (PstC and PstA) and a solute-binding protein (PstS).

The protein localises to the cell inner membrane. The catalysed reaction is phosphate(out) + ATP + H2O = ADP + 2 phosphate(in) + H(+). Part of the ABC transporter complex PstSACB involved in phosphate import. Responsible for energy coupling to the transport system. The protein is Phosphate import ATP-binding protein PstB 2 of Pseudomonas syringae pv. syringae (strain B728a).